The primary structure comprises 451 residues: MGKYFGTDGVRGVANQELTPELAFKLGRYGGYVLAHNKGEKHPRVLVGRDTRVSGEMLESALIAGLISIGAEVMRLGIISTPGVAYLTRDMGAELGVMISASHNPVADNGIKFFGSDGFKLSDEQENEIEALLDQENPELPRPVGNDIVHYSDYFEGAQKYLSYLKSTVDVNFEGLKIALDGANGSTSSLAPFLFGDLEADTETIGCSPDGYNINEKCGSTHPEKLAEKVVETESDFGLAFDGDGDRIIAVDENGQIVDGDQIMFIIGQEMHKNQELNNDMIVSTVMSNLGFYKALEQEGIKSNKTKVGDRYVVEEMRRGNYNLGGEQSGHIVMMDYNTTGDGLLTGIQLASVIKMTGKSLSELAGQMKKYPQSLINVRVTDKYRVEENVDVKEVMTKVEVEMNGEGRILVRPSGTEPLVRVMVEAATDEDAERFAQQIADVVQDKMGLDK.

The active-site Phosphoserine intermediate is the Ser102. Mg(2+) is bound by residues Ser102, Asp242, Asp244, and Asp246. A Phosphoserine modification is found at Ser102.

The protein belongs to the phosphohexose mutase family. It depends on Mg(2+) as a cofactor. Activated by phosphorylation.

The enzyme catalyses alpha-D-glucosamine 1-phosphate = D-glucosamine 6-phosphate. Its function is as follows. Catalyzes the conversion of glucosamine-6-phosphate to glucosamine-1-phosphate. The protein is Phosphoglucosamine mutase of Staphylococcus aureus (strain USA300).